The following is a 152-amino-acid chain: Transcription factor ATOH7 (152 aa).

One can recognise a bHLH domain in the interval 40-92 (RRRLAANARERRRMQGLNTAFDRLRRVVPQWGQDKKLSKYETLQMALSYIMAL).

Forms a heterodimer with TCF3 isoform E47; interaction may be required for DNA-binding in certain situations.

The protein resides in the nucleus. Its subcellular location is the perikaryon. It is found in the cell projection. The protein localises to the axon. Its function is as follows. Transcription factor that binds to DNA at the consensus sequence 5'-CAG[GC]TG-3'. Dimerization with TCF3 isoform E47 may be required in certain situations. Binds to gene promoters and enhancer elements, and thereby regulates a transcriptional program of retinal ganglion cell (RGC) determinant genes. Although the exact mechanism is not certain, retinal transcription regulation by ATOH7 has a role in RGC determination and survival, photoreceptor population development, targeting of RGC axons to the optic nerve and development of the retino-hypothalamic tract. Binds to its own promoter and enhancer sequences, suggesting autoregulation of ATOH7 transcription. Required for retinal circadian rhythm photoentrainment. Plays a role in brainstem auditory signaling and binaural processing. The sequence is that of Transcription factor ATOH7 from Homo sapiens (Human).